The primary structure comprises 331 residues: Biotin synthase (331 aa).

Positions 40 to 269 (YRVQLASLLS…HARVRLSAGR (230 aa)) constitute a Radical SAM core domain. C55, C59, and C62 together coordinate [4Fe-4S] cluster. Residues C100, C132, C192, and R264 each coordinate [2Fe-2S] cluster.

It belongs to the radical SAM superfamily. Biotin synthase family. In terms of assembly, homodimer. [4Fe-4S] cluster is required as a cofactor. Requires [2Fe-2S] cluster as cofactor.

The enzyme catalyses (4R,5S)-dethiobiotin + (sulfur carrier)-SH + 2 reduced [2Fe-2S]-[ferredoxin] + 2 S-adenosyl-L-methionine = (sulfur carrier)-H + biotin + 2 5'-deoxyadenosine + 2 L-methionine + 2 oxidized [2Fe-2S]-[ferredoxin]. Its pathway is cofactor biosynthesis; biotin biosynthesis; biotin from 7,8-diaminononanoate: step 2/2. Functionally, catalyzes the conversion of dethiobiotin (DTB) to biotin by the insertion of a sulfur atom into dethiobiotin via a radical-based mechanism. This Synechococcus sp. (strain CC9605) protein is Biotin synthase.